Here is a 98-residue protein sequence, read N- to C-terminus: uncharacterized protein (98 aa).

The chain crosses the membrane as a helical span at residues 10–30 (LYGFFAVTGVLIASFIIGEIV).

It localises to the host membrane. This is an uncharacterized protein from Saccharolobus islandicus (Sulfolobus islandicus).